The sequence spans 326 residues: Glycerol-3-phosphate dehydrogenase [NAD(P)+] (326 aa).

NADPH is bound by residues Trp15, Arg35, and Lys107. 3 residues coordinate sn-glycerol 3-phosphate: Lys107, Gly135, and Ser137. Ala139 contributes to the NADPH binding site. Residues Lys190, Asp243, Ser253, Arg254, and Asn255 each coordinate sn-glycerol 3-phosphate. The active-site Proton acceptor is the Lys190. Arg254 lines the NADPH pocket. Positions 273 and 275 each coordinate NADPH.

Belongs to the NAD-dependent glycerol-3-phosphate dehydrogenase family.

The protein localises to the cytoplasm. It carries out the reaction sn-glycerol 3-phosphate + NAD(+) = dihydroxyacetone phosphate + NADH + H(+). The catalysed reaction is sn-glycerol 3-phosphate + NADP(+) = dihydroxyacetone phosphate + NADPH + H(+). Its pathway is membrane lipid metabolism; glycerophospholipid metabolism. In terms of biological role, catalyzes the reduction of the glycolytic intermediate dihydroxyacetone phosphate (DHAP) to sn-glycerol 3-phosphate (G3P), the key precursor for phospholipid synthesis. In Bradyrhizobium sp. (strain BTAi1 / ATCC BAA-1182), this protein is Glycerol-3-phosphate dehydrogenase [NAD(P)+].